The sequence spans 223 residues: Serine/threonine/tyrosine-interacting protein (223 aa).

One can recognise a Tyrosine-protein phosphatase domain in the interval 28 to 176 (EMQEVLPGLF…LQEYEAIYLA (149 aa)). The Interaction with FBXW7 signature appears at 76–78 (FQQ). A phosphoserine mark is found at serine 184 and serine 201. A disordered region spans residues 199 to 223 (TGSVKRTHEEDDDFGNMQVATAQNG).

The protein belongs to the protein-tyrosine phosphatase family. Non-receptor class subfamily. Interacts with MAPK1; independently of MAPK1 phosphorylation status. Interacts with CARHSP1/Crhsp-24. Interacts (via FQQ motif) with FBXW7 (via F-box domain); the interaction is direct and prevents FBXW7 interaction with SKP1, a component of the SCF(FBXW7) complex. Widely expressed with highest levels in muscle, testis and brain. In testis, expression starts 13-14 days after birth and is limited to the seminiferous tubule and to round and elongating spermatids. Expression is low in condensing spermatids and pachytene spermatocytes, and absent in spermatogonia, spermatozoa and somatic Sertoli cells.

The protein resides in the nucleus. Its subcellular location is the cytoplasm. The protein localises to the cytosol. In terms of biological role, catalytically inactive phosphatase. Acts as a nuclear anchor for MAPK1/MAPK3 (ERK1/ERK2). Modulates cell-fate decisions and cell migration by spatiotemporal regulation of MAPK1/MAPK3 (ERK1/ERK2). By binding to the F-box of FBXW7, prevents the assembly of FBXW7 into the SCF E3 ubiquitin-protein ligase complex, and thereby inhibits degradation of its substrates. Plays a role in spermatogenesis. This Mus musculus (Mouse) protein is Serine/threonine/tyrosine-interacting protein.